Here is a 499-residue protein sequence, read N- to C-terminus: Aprataxin and PNK-like factor (499 aa).

Residues 1 to 108 (MPSDFFLQPL…RVFSAESEVE (108 aa)) enclose the FHA-like domain. A Phosphoserine; by ATM modification is found at Ser-116. Disordered stretches follow at residues 134–183 (VNLP…TQRK), 197–292 (DQSL…KTNK), and 305–358 (VSKH…DTAD). Polar residues predominate over residues 141–152 (TGASQLQGSPEI). Ser-149 bears the Phosphoserine mark. The KBM signature appears at 182–191 (RKRILPAWML). The segment covering 239–248 (PSGNSKSVSA) has biased composition (polar residues). Positions 251–261 (DPGKKCRKADQ) are enriched in basic and acidic residues. Residues 264 to 278 (PGVSSENVPESSSSN) are compositionally biased toward low complexity. The segment covering 281 to 292 (KDPDVDIVKTNK) has biased composition (basic and acidic residues). Residues 340 to 349 (PESSSAPSSP) are compositionally biased toward low complexity. A glycoprotein contacts are provided by Arg-371, Tyr-376, Tyr-381, and Arg-382. The PBZ-type 1 zinc-finger motif lies at 372–393 (TACMYGANCYRRNPLHFQHFSH). The segment at 401 to 411 (EVHGTDEGVIG) is flexible linker. The PBZ-type 2 zinc finger occupies 414 to 435 (PECPYGASCYRKNPQHKMEYRH). Residues Tyr-418, Tyr-423, and Arg-424 each coordinate a glycoprotein. Residues 440–499 (ARVALDEDDDDVGQPSDDEDEEDYEPTDEDSDWHPGKDDEEQEDVDELLKEAKSSLHLKH) form a disordered region. Residues 445 to 470 (DEDDDDVGQPSDDEDEEDYEPTDEDS) show a composition bias toward acidic residues. Residues 463-487 (YEPTDEDSDWHPGKDDEEQEDVDEL) carry the NAP1L motif motif.

It belongs to the APLF family. In terms of assembly, interacts with LIG4. Interacts with PARP1. Interacts with XRCC4. Interacts (via KBM motif) with XRCC5 and XRCC6; promoting recruitment to DNA damage sites. Interacts with XRCC1. Interacts (via C-terminal disordered region) with histones; interacts with histone H2A, H2B and H3-H4. In terms of processing, poly-ADP-ribosylated. In addition to binding non covalently poly-ADP-ribose via its PBZ-type zinc fingers, the protein is also covalently poly-ADP-ribosylated by PARP1. Post-translationally, phosphorylated in an ATM-dependent manner upon double-strand DNA break.

It is found in the nucleus. Its subcellular location is the chromosome. It localises to the cytoplasm. The protein resides in the cytosol. In terms of biological role, histone chaperone involved in single-strand and double-strand DNA break repair. Recruited to sites of DNA damage through interaction with branched poly-ADP-ribose chains, a polymeric post-translational modification synthesized transiently at sites of chromosomal damage to accelerate DNA strand break repair reactions. Following recruitment to DNA damage sites, acts as a histone chaperone that mediates histone eviction during DNA repair and promotes recruitment of histone variant MACROH2A1. Also has a nuclease activity: displays apurinic-apyrimidinic (AP) endonuclease and 3'-5' exonuclease activities in vitro. Also able to introduce nicks at hydroxyuracil and other types of pyrimidine base damage. Together with PARP3, promotes the retention of the LIG4-XRCC4 complex on chromatin and accelerate DNA ligation during non-homologous end-joining (NHEJ). Also acts as a negative regulator of cell pluripotency by promoting histone exchange. Required for the embryo implantation during the epithelial to mesenchymal transition in females. The chain is Aprataxin and PNK-like factor (Aplf) from Mus musculus (Mouse).